The following is a 287-amino-acid chain: ATP synthase subunit a (287 aa).

Transmembrane regions (helical) follow at residues 38–58, 96–116, 139–161, 187–207, 225–245, and 259–279; these read DSMV…WTAA, FIAP…AMDM, VVPT…LRFW, PLFA…EYVA, LVFM…SGVL, and LFHI…ALIY.

The protein belongs to the ATPase A chain family. As to quaternary structure, F-type ATPases have 2 components, CF(1) - the catalytic core - and CF(0) - the membrane proton channel. CF(1) has five subunits: alpha(3), beta(3), gamma(1), delta(1), epsilon(1). CF(0) has three main subunits: a(1), b(2) and c(9-12). The alpha and beta chains form an alternating ring which encloses part of the gamma chain. CF(1) is attached to CF(0) by a central stalk formed by the gamma and epsilon chains, while a peripheral stalk is formed by the delta and b chains.

It is found in the cell inner membrane. Key component of the proton channel; it plays a direct role in the translocation of protons across the membrane. The polypeptide is ATP synthase subunit a (Verminephrobacter eiseniae (strain EF01-2)).